A 184-amino-acid polypeptide reads, in one-letter code: ATP synthase subunit b, chloroplastic (184 aa).

Residues 27 to 49 traverse the membrane as a helical segment; it reads LATNPINLSVVLGVLIFFGKGVL.

The protein belongs to the ATPase B chain family. F-type ATPases have 2 components, F(1) - the catalytic core - and F(0) - the membrane proton channel. F(1) has five subunits: alpha(3), beta(3), gamma(1), delta(1), epsilon(1). F(0) has four main subunits: a(1), b(1), b'(1) and c(10-14). The alpha and beta chains form an alternating ring which encloses part of the gamma chain. F(1) is attached to F(0) by a central stalk formed by the gamma and epsilon chains, while a peripheral stalk is formed by the delta, b and b' chains.

The protein resides in the plastid. Its subcellular location is the chloroplast thylakoid membrane. Functionally, f(1)F(0) ATP synthase produces ATP from ADP in the presence of a proton or sodium gradient. F-type ATPases consist of two structural domains, F(1) containing the extramembraneous catalytic core and F(0) containing the membrane proton channel, linked together by a central stalk and a peripheral stalk. During catalysis, ATP synthesis in the catalytic domain of F(1) is coupled via a rotary mechanism of the central stalk subunits to proton translocation. In terms of biological role, component of the F(0) channel, it forms part of the peripheral stalk, linking F(1) to F(0). The sequence is that of ATP synthase subunit b, chloroplastic from Carica papaya (Papaya).